The following is a 550-amino-acid chain: Hydroxylamine reductase (550 aa).

[2Fe-2S] cluster is bound by residues cysteine 3, cysteine 6, cysteine 18, and cysteine 25. Hybrid [4Fe-2O-2S] cluster is bound by residues histidine 249, glutamate 273, cysteine 317, cysteine 405, cysteine 433, cysteine 458, glutamate 492, and lysine 494. At cysteine 405 the chain carries Cysteine persulfide.

The protein belongs to the HCP family. It depends on [2Fe-2S] cluster as a cofactor. The cofactor is hybrid [4Fe-2O-2S] cluster.

It is found in the cytoplasm. The catalysed reaction is A + NH4(+) + H2O = hydroxylamine + AH2 + H(+). In terms of biological role, catalyzes the reduction of hydroxylamine to form NH(3) and H(2)O. The chain is Hydroxylamine reductase from Escherichia fergusonii (strain ATCC 35469 / DSM 13698 / CCUG 18766 / IAM 14443 / JCM 21226 / LMG 7866 / NBRC 102419 / NCTC 12128 / CDC 0568-73).